Here is a 378-residue protein sequence, read N- to C-terminus: GDP-mannose 3,5-epimerase 1 (378 aa).

NAD(+) contacts are provided by residues 36-62 (GAGGFIGSHIARRLKSEGHYIIASDWK), Asp60, and Asp80. Residues Gly105 and 145 to 147 (SAC) contribute to the substrate site. Tyr175 and Lys179 together coordinate NAD(+). Tyr175 serves as the catalytic Proton acceptor. Residues Asn204, 217 to 219 (EKA), Lys226, 242 to 244 (QTR), Arg307, and Ser357 contribute to the substrate site.

This sequence belongs to the NAD(P)-dependent epimerase/dehydratase family. As to quaternary structure, homodimer. Requires NAD(+) as cofactor.

The enzyme catalyses GDP-alpha-D-mannose = GDP-beta-L-gulose. It carries out the reaction GDP-beta-L-gulose = GDP-beta-L-galactose. The protein operates within cofactor biosynthesis; L-ascorbate biosynthesis via GDP-alpha-D-mannose pathway; L-ascorbate from GDP-alpha-D-mannose: step 1/5. Its activity is regulated as follows. Strongly activated by NAD. Activated by NADP. Slightly activated by NADH and NADPH. Inhibited by GDP. Its function is as follows. Catalyzes a reversible epimerization of GDP-D-mannose that precedes the committed step in the biosynthesis of vitamin C (L-ascorbate), resulting in the hydrolysis of the highly energetic glycosyl-pyrophosphoryl linkage. Able to catalyze 2 distinct epimerization reactions and can release both GDP-L-galactose and GDP-L-gulose from GDP-mannose. This Oryza sativa subsp. japonica (Rice) protein is GDP-mannose 3,5-epimerase 1 (GME-1).